Here is a 485-residue protein sequence, read N- to C-terminus: Neuropeptide F receptor (485 aa).

Residues methionine 1 to serine 91 lie on the Extracellular side of the membrane. The helical transmembrane segment at methionine 92 to isoleucine 112 threads the bilayer. Residues arginine 113–asparagine 122 are Cytoplasmic-facing. The chain crosses the membrane as a helical span at residues leucine 123–threonine 143. Topologically, residues leucine 144–threonine 163 are extracellular. The cysteines at positions 161 and 248 are disulfide-linked. The chain crosses the membrane as a helical span at residues isoleucine 164 to phenylalanine 184. Residues aspartate 185–glycine 202 are Cytoplasmic-facing. The chain crosses the membrane as a helical span at residues alanine 203–valine 223. Over tyrosine 224–serine 262 the chain is Extracellular. The chain crosses the membrane as a helical span at residues isoleucine 263–glycine 283. The Cytoplasmic portion of the chain corresponds to isoleucine 284 to cysteine 317. A helical transmembrane segment spans residues leucine 318–leucine 338. At tyrosine 339–tyrosine 355 the chain is on the extracellular side. A helical membrane pass occupies residues alanine 356 to leucine 376. The Cytoplasmic segment spans residues asparagine 377–arginine 485.

It belongs to the G-protein coupled receptor 1 family. As to expression, expressed in midgut, brain lobes and ventral nerve cord of larvae. In adults, expressed in a pair of dorsolateral neurons in the protocerebrum, and the central complex and a small number of neurons in the subesophageal ganglion (at protein level). Expressed in a subset of sugar-responsive PAIN neurons in the thoracic body but is absent from other peripheral PAIN neurons.

It localises to the membrane. Functionally, receptor for NPF. Integral part of the sensory system that mediates food signaling, providing the neural basis for the regulation of food response; coordinates larval foraging and social behavior changes during development. Required in dopaminergic (DA) neurons that innervate the mushroom body for satiety to suppress appetitive memory performance; a key factor in the internal state of hunger in the brain. NPF neurons coordinately modulate diverse sensory and motor neurons important for feeding, flight, and locomotion. NPF/NPFR pathway exerts its suppressive effect on larval aversion to diverse stressful stimuli (chemical stress and noxious heat) through attenuation of TRP channel-induced neuronal excitation. NPF neural signaling system plays a physiological role in acute modulation of alcohol sensitivity in adults, rather than a general response to intoxication by sedative agents. Activation and inhibition of the NPF system reduces and enhances ethanol preference, respectively. Sexual experience, the NPF system activity and ethanol consumption are all linked; sexual deprivation is a major contributor to enhanced ethanol preference. The protein is Neuropeptide F receptor of Drosophila melanogaster (Fruit fly).